The sequence spans 157 residues: Vitamin K-dependent protein C (157 aa).

The Peptidase S1 domain maps to 1-157; that stretch reads EKWELDLDIK…GCGRLHNYGV (157 aa). Asparagine 17 is a glycosylation site (N-linked (GlcNAc...) asparagine). Aspartate 26 acts as the Charge relay system in catalysis. Asparagine 78 is a glycosylation site (N-linked (GlcNAc...) asparagine). Intrachain disulfides connect cysteine 96/cysteine 110 and cysteine 121/cysteine 149. The active-site Charge relay system is the serine 125.

The protein belongs to the peptidase S1 family. As to expression, plasma; synthesized in the liver.

It is found in the secreted. The protein resides in the golgi apparatus. The protein localises to the endoplasmic reticulum. It catalyses the reaction Degradation of blood coagulation factors Va and VIIIa.. In terms of biological role, protein C is a vitamin K-dependent serine protease that regulates blood coagulation by inactivating factors Va and VIIIa in the presence of calcium ions and phospholipids. Exerts a protective effect on the endothelial cell barrier function. This is Vitamin K-dependent protein C (PROC) from Felis catus (Cat).